The primary structure comprises 417 residues: Tryptophan decarboxylase (417 aa).

Lysine 263 is subject to N6-(pyridoxal phosphate)lysine.

The protein belongs to the group II decarboxylase family. Pyridoxal 5'-phosphate is required as a cofactor.

It localises to the cytoplasm. It catalyses the reaction L-tryptophan + H(+) = tryptamine + CO2. Inhibited by (S)-alpha-fluoromethyltryptophan. In terms of biological role, catalyzes the decarboxylation of tryptophan to tryptamine. Tryptamine is a neurotransmitter that induces the release of serotonin, which is suggested to modulate gastrointestinal motility. Therefore, the tryptophan decarboxylase from the gut bacteria Clostridium sporogenes (strain ATCC 15579) may influence host brain and behavior. Has weak activity with tyrosine. Activity against phenylalanine is undetectable. This chain is Tryptophan decarboxylase, found in Clostridium sporogenes (strain ATCC 15579).